We begin with the raw amino-acid sequence, 234 residues long: Cell fusion protein dni1 (234 aa).

A signal peptide spans 1–32 (MLFLHSVVQGTGTLCTLAAWILLALVMTGCQS). Residues 33 to 96 (STTSKFQLFS…RSKFLINEVH (64 aa)) are Extracellular-facing. The helical transmembrane segment at 97–117 (PWMIVFSFCVCGVSFLMGVVS) threads the bilayer. Over 118–132 (SLPLIGRLEFLRNIR) the chain is Cytoplasmic. Residues 133–153 (ISLSFFSFFSILVTALFAHVA) form a helical membrane-spanning segment. The Extracellular segment spans residues 154–178 (VSSFVMAVGNGTQNRVTASLGKKAM). A helical membrane pass occupies residues 179–199 (IFLWCSMGLVTLTGITDSIIL). Over 200 to 234 (LVTSRTKKIRKTILEKSKVLTPSSSFSSKSSTTKY) the chain is Cytoplasmic.

This sequence belongs to the SUR7 family.

The protein localises to the cell membrane. It localises to the cell tip. Cell membrane protein which plays a relevant role in coordinating membrane organization and cell wall remodeling during mating. The sequence is that of Cell fusion protein dni1 (dni1) from Schizosaccharomyces pombe (strain 972 / ATCC 24843) (Fission yeast).